Here is a 377-residue protein sequence, read N- to C-terminus: 4-hydroxy-3-methylbut-2-en-1-yl diphosphate synthase (flavodoxin) (377 aa).

Residues cysteine 275, cysteine 278, cysteine 310, and glutamate 317 each coordinate [4Fe-4S] cluster.

This sequence belongs to the IspG family. [4Fe-4S] cluster is required as a cofactor.

The enzyme catalyses (2E)-4-hydroxy-3-methylbut-2-enyl diphosphate + oxidized [flavodoxin] + H2O + 2 H(+) = 2-C-methyl-D-erythritol 2,4-cyclic diphosphate + reduced [flavodoxin]. It participates in isoprenoid biosynthesis; isopentenyl diphosphate biosynthesis via DXP pathway; isopentenyl diphosphate from 1-deoxy-D-xylulose 5-phosphate: step 5/6. Functionally, converts 2C-methyl-D-erythritol 2,4-cyclodiphosphate (ME-2,4cPP) into 1-hydroxy-2-methyl-2-(E)-butenyl 4-diphosphate. The chain is 4-hydroxy-3-methylbut-2-en-1-yl diphosphate synthase (flavodoxin) from Jannaschia sp. (strain CCS1).